A 367-amino-acid chain; its full sequence is Heme A synthase (367 aa).

5 consecutive transmembrane segments (helical) span residues 26–46 (IRGW…VGGA), 111–131 (LLAR…WVTG), 139–159 (LPLL…WWMV), 174–194 (LATH…IYRG), and 212–232 (AGAI…VAGL). Heme is bound at residue His274. A run of 3 helical transmembrane segments spans residues 276 to 296 (LGAY…LRAA), 305 to 325 (SVLL…TLLL), and 327 to 347 (VPIG…GFAI). His335 contacts heme.

Belongs to the COX15/CtaA family. Type 2 subfamily. As to quaternary structure, interacts with CtaB. Heme b is required as a cofactor.

It localises to the cell membrane. It catalyses the reaction Fe(II)-heme o + 2 A + H2O = Fe(II)-heme a + 2 AH2. The protein operates within porphyrin-containing compound metabolism; heme A biosynthesis; heme A from heme O: step 1/1. In terms of biological role, catalyzes the conversion of heme O to heme A by two successive hydroxylations of the methyl group at C8. The first hydroxylation forms heme I, the second hydroxylation results in an unstable dihydroxymethyl group, which spontaneously dehydrates, resulting in the formyl group of heme A. This Rhizobium meliloti (strain 1021) (Ensifer meliloti) protein is Heme A synthase.